A 206-amino-acid polypeptide reads, in one-letter code: MNILQIDSSVLGDNSVSRSLTASVVADLVAATPDAKVTVRDLDQDAPAHLSGNLLPVLGGPKEGLSAIQEAELQRTEQWLAEFLAADVLVVGVPQYNFSIPSQLKAWIDRIAQAGRTFKYTENGPVGLAGGKRVIVVSSRGGVRQDANELDLHEKTVDIVFRFLGITDITYVRAHGLAMGPQFREAGLASARTEIAALNDASRLAA.

Residues S9, 15–17, and 139–142 each bind FMN; these read SVS and SRGG.

It belongs to the azoreductase type 1 family. As to quaternary structure, homodimer. Requires FMN as cofactor.

The catalysed reaction is 2 a quinone + NADH + H(+) = 2 a 1,4-benzosemiquinone + NAD(+). It carries out the reaction N,N-dimethyl-1,4-phenylenediamine + anthranilate + 2 NAD(+) = 2-(4-dimethylaminophenyl)diazenylbenzoate + 2 NADH + 2 H(+). Its function is as follows. Quinone reductase that provides resistance to thiol-specific stress caused by electrophilic quinones. Functionally, also exhibits azoreductase activity. Catalyzes the reductive cleavage of the azo bond in aromatic azo compounds to the corresponding amines. The sequence is that of FMN-dependent NADH:quinone oxidoreductase from Cupriavidus necator (strain ATCC 17699 / DSM 428 / KCTC 22496 / NCIMB 10442 / H16 / Stanier 337) (Ralstonia eutropha).